Reading from the N-terminus, the 234-residue chain is HTH-type transcriptional regulator ArcR (234 aa).

40-129 (VRHYTKGQVI…MAFLCKANDD (90 aa)) provides a ligand contact to a nucleoside 3',5'-cyclic phosphate. Positions 155–228 (KFAKDRIIKL…HKNWLVSKHL (74 aa)) constitute an HTH crp-type domain. Residues 188–207 (IQLMSDMAGISRETAGHIIH) constitute a DNA-binding region (H-T-H motif).

It is found in the cytoplasm. In terms of biological role, positively regulates the expression of the arcABDCR operon under anaerobic conditions, thus playing an essential role in arginine catabolism. May also control the expression of genes encoding proteins which are involved in anaerobic metabolism. Can bind cyclic AMP. The sequence is that of HTH-type transcriptional regulator ArcR (arcR) from Staphylococcus aureus (strain MSSA476).